A 433-amino-acid polypeptide reads, in one-letter code: MAQFYSAKRRTTTRQIITVSVNDLDSFGQGVARHNGKTLFIPGLLPQENAEVTVTEDKKQYARAKVVRRLSDSPERETPRCPHFGVCGGCQQQHASVDLQQRSKSAALARLMKHEVSEVIADVPWGYRRRARLSLNYLPKTQQLQMGFRKAGSSDIVDVKQCPILVPQLEALLPKVRACLGSLQAMRHLGHVELVQATSGTLMILRHTAPLSSADREKLECFSHSEGLDLYLAPDSEILETVSGEMPWYDSNGLRLTFSPRDFIQVNAGVNQKMVARALEWLDVEPEDCVLDLFCGMGNFTLPLATQAASVVGVEGVPALVEKGQQNARLNGLQNVTFYHENLEEDVTKQPWAKNGFDKVLLDPARAGAAGVMQQIIKLEPIRIVYVSCNPATLARDSEALLKAGYTIARLAMLDMFPHTGHLESMVLFSRVK.

Residues 10–68 form the TRAM domain; that stretch reads RTTTRQIITVSVNDLDSFGQGVARHNGKTLFIPGLLPQENAEVTVTEDKKQYARAKVVR. Residues cysteine 81, cysteine 87, cysteine 90, and cysteine 162 each coordinate [4Fe-4S] cluster. Residues glutamine 265, phenylalanine 294, asparagine 299, glutamate 315, asparagine 342, and aspartate 363 each coordinate S-adenosyl-L-methionine. Cysteine 389 serves as the catalytic Nucleophile.

Belongs to the class I-like SAM-binding methyltransferase superfamily. RNA M5U methyltransferase family. RlmD subfamily.

It carries out the reaction uridine(1939) in 23S rRNA + S-adenosyl-L-methionine = 5-methyluridine(1939) in 23S rRNA + S-adenosyl-L-homocysteine + H(+). Catalyzes the formation of 5-methyl-uridine at position 1939 (m5U1939) in 23S rRNA. The chain is 23S rRNA (uracil(1939)-C(5))-methyltransferase RlmD from Escherichia coli (strain UTI89 / UPEC).